Consider the following 237-residue polypeptide: Beta-glucanase (237 aa).

An N-terminal signal peptide occupies residues 1-23 (MKKKSCFTLVTTFAFSLIFSVSA). One can recognise a GH16 domain in the interval 28–237 (VFWEPLSYFN…EYDWVKYTSN (210 aa)). Cys-55 and Cys-84 form a disulfide bridge. Residue Glu-128 is the Nucleophile of the active site. Glu-132 (proton donor) is an active-site residue.

Belongs to the glycosyl hydrolase 16 family.

The enzyme catalyses Hydrolysis of (1-&gt;4)-beta-D-glucosidic linkages in beta-D-glucans containing (1-&gt;3)- and (1-&gt;4)-bonds.. In Paenibacillus macerans (Bacillus macerans), this protein is Beta-glucanase.